The sequence spans 215 residues: MPGEATETVPATEQELPQPQAETGSGTESDSDESVPELEGQDSTQATTQQAQLAAAAEIDEEPVSKAKQSRSEKKARKAMSKLGLRQVTGVTRVTIRKSKNILFVITKPDVYKSPASDTYIVFGEAKIEDLSQQAQLAAAEKFKVQGEAVSNIQENTQTPTVQEESEEEEVDETGVEVKDIEWVMSQANVSRAKAVRALKNNSNNIVNAIMELTM.

The segment at 1-81 (MPGEATETVP…SEKKARKAMS (81 aa)) is disordered. Polar residues predominate over residues 9-28 (VPATEQELPQPQAETGSGTE). Residues 29–40 (SDSDESVPELEG) are compositionally biased toward acidic residues. Ser43 is modified (phosphoserine; by ILK1). The segment covering 44-57 (TQATTQQAQLAAAA) has biased composition (low complexity). A required for DNA-binding region spans residues 69-80 (QSRSEKKARKAM). The NAC-A/B domain occupies 70–135 (SRSEKKARKA…AKIEDLSQQA (66 aa)). Residues 93–108 (RVTIRKSKNILFVITK) form an RNA/DNA-binding region. A Phosphoserine modification is found at Ser132. The residue at position 142 (Lys142) is an N6-acetyllysine; alternate. Lys142 is covalently cross-linked (Glycyl lysine isopeptide (Lys-Gly) (interchain with G-Cter in SUMO2); alternate). Thr159 carries the phosphothreonine; by GSK3-beta modification. The residue at position 161 (Thr161) is a Phosphothreonine. Phosphoserine is present on residues Ser166, Ser186, Ser191, and Ser203. Positions 176–213 (VEVKDIEWVMSQANVSRAKAVRALKNNSNNIVNAIMEL) constitute a UBA domain.

It belongs to the NAC-alpha family. Part of the nascent polypeptide-associated complex (NAC), which is a heterodimer of NACA and BTF3 (via NAC-A/B domains). NAC associates with ribosomes through the BTF3/NACB subunit and contacts the ribosomal protein L23, which is positioned near the exiting site. Both subunits can contact nascent polypeptide chains. NACA may also form homodimers, and only this form binds DNA. Interacts with TBP and JUN. Phosphorylation of Ser-43 by ILK during cell adhesion may promote nuclear localization. Phosphorylation of Thr-159 by GSK3B may promote proteasome mediated degradation.

The protein localises to the cytoplasm. Its subcellular location is the nucleus. Prevents inappropriate targeting of non-secretory polypeptides to the endoplasmic reticulum (ER). Binds to nascent polypeptide chains as they emerge from the ribosome and blocks their interaction with the signal recognition particle (SRP), which normally targets nascent secretory peptides to the ER. Also reduces the inherent affinity of ribosomes for protein translocation sites in the ER membrane (M sites). May act as a specific coactivator for JUN, binding to DNA and stabilizing the interaction of JUN homodimers with target gene promoters. This chain is Nascent polypeptide-associated complex subunit alpha, found in Chinchilla lanigera (Long-tailed chinchilla).